The chain runs to 316 residues: BRCA2 and CDKN1A-interacting protein (316 aa).

A disordered region spans residues 1 to 57 (MASKAKKRAVGNGIQRPLGAPGQREEEEEEEDEVEDEEEDEDDSDEEEDEVDEIVDE). The span at 25-57 (EEEEEEEDEVEDEEEDEDDSDEEEDEVDEIVDE) shows a compositional bias: acidic residues. Ser-44 and Ser-114 each carry phosphoserine. The interaction with BRCA2 stretch occupies residues 61 to 169 (IEFEAYSISD…EQSMVEQLDK (109 aa)). Residues 163–261 (MVEQLDKLLN…NAEEEFFYEK (99 aa)) are interaction with CDKN1A. Ser-283 carries the phosphoserine modification.

Belongs to the BCP1 family. In terms of assembly, interacts with BRCA2, CDKN1A and MTDH/LYRIC. Interacts with DCTN1/p150-glued and ACTR1A/ARP1. Interacts with alpha-, beta- and gamma-tubulins. Interacts with TENT5C; the interaction has no effect on TENT5C poly(A) polymerase function. As to expression, expressed in the testes (at protein level).

It is found in the nucleus. Its subcellular location is the cytoplasm. The protein resides in the cytoskeleton. It localises to the microtubule organizing center. The protein localises to the centrosome. It is found in the centriole. Its subcellular location is the spindle pole. During interphase, required for microtubule organizing and anchoring activities. During mitosis, required for the organization and stabilization of the spindle pole. May promote cell cycle arrest by enhancing the inhibition of CDK2 activity by CDKN1A. May be required for repair of DNA damage by homologous recombination in conjunction with BRCA2. May not be involved in non-homologous end joining (NHEJ). This is BRCA2 and CDKN1A-interacting protein (Bccip) from Mus musculus (Mouse).